Consider the following 690-residue polypeptide: Elongation factor G (690 aa).

The tr-type G domain maps to 8–283 (SKCRNIGIMA…AVVDFLPAPN (276 aa)). GTP is bound by residues 17 to 24 (AHIDAGKT), 81 to 85 (DTPGH), and 135 to 138 (NKMD).

It belongs to the TRAFAC class translation factor GTPase superfamily. Classic translation factor GTPase family. EF-G/EF-2 subfamily.

Its subcellular location is the cytoplasm. In terms of biological role, catalyzes the GTP-dependent ribosomal translocation step during translation elongation. During this step, the ribosome changes from the pre-translocational (PRE) to the post-translocational (POST) state as the newly formed A-site-bound peptidyl-tRNA and P-site-bound deacylated tRNA move to the P and E sites, respectively. Catalyzes the coordinated movement of the two tRNA molecules, the mRNA and conformational changes in the ribosome. The sequence is that of Elongation factor G from Ehrlichia canis (strain Jake).